Here is a 300-residue protein sequence, read N- to C-terminus: Iron/alpha-ketoglutarate-dependent dioxygenase okaE (300 aa).

Fe cation contacts are provided by H134, D136, and H210.

This sequence belongs to the PhyH family. Homodimer. Fe cation serves as cofactor.

The catalysed reaction is okaramine A + 2-oxoglutarate + AH2 + O2 = 12-deshydroxyl okaramine E + succinate + A + CO2 + H2O. It carries out the reaction 12-deshydroxyl okaramine E + 2-oxoglutarate + O2 = okaramine E + succinate + CO2. The enzyme catalyses okaramine A + 2-oxoglutarate + O2 = okaramine E + succinate + CO2. It participates in alkaloid biosynthesis. Its pathway is secondary metabolite biosynthesis; terpenoid biosynthesis. Functionally, iron/alpha-ketoglutarate-dependent dioxygenase; part of the gene cluster that mediates the biosynthesis of okaramine B, a prenylated indole alkaloid that possesses an unusual octacyclic ring system, including a four-membered azetidine ring and an eight-membered azocine ring, and that exhibits insecticidal activity against silkworm larvae. Within the pathway, okaE forms the unusual 2-dimethyl-3-methyl-azetidine ring to yield 12-deshydroxyl okaramine E from okaramine A. OkaE also catalyzes the hydroxylation of 12-deshydroxyl okaramine E to produce okaramine E. The biosynthesis begins with the NRPS okaA that condenses two tryptophan molecules into cyclo(L-Trp-L-Trp). Prenylation by the prenyltransferase okaC then leads to the formation of cyclo(N8-(alpha,alpha-dimethylallyl)-L-Trp-6a-(alpha,alpha-dime-thylallyl)-L-Trp). This is followed by indole 2,3-epoxidation by the FAD-dependent monooxygenase okaB to facilitate the formation of the hexahydropyrrolo[2,3-b]indole (HPI) moiety of okaramine C. The cytochrome P450 monooxygenase okaD then likely catalyzes formation of the eight-membered ring of okaramine A. The dioxygenase okaE further forms the unusual 2-dimethyl-3-methyl-azetidine ring to yield 12-deshydroxyl okaramine E, as well as the hydroxylation of 12-deshydroxyl okaramine E to produce okaramine E. The cytochrome P450 monoxygenase okaG converts 12-deshydroxyl okaramine E into 3-desmethyl okaramine B which is further methylated by the methyltransferase okaF into okaramine B. In a shunt pathway, okaG and okaF together are also able to convert okaramine E into okaramine D. Okaramine H is produced by nonenzymatic conversion from okaramine A. This Penicillium ochrochloron protein is Iron/alpha-ketoglutarate-dependent dioxygenase okaE.